A 298-amino-acid polypeptide reads, in one-letter code: ER-bound oxygenase mpaB (298 aa).

The Lumenal segment spans residues 1–24; that stretch reads MDKGTSFFTTPSFSATTRAIFNTM. A helical membrane pass occupies residues 25–45; the sequence is PQWFSFAVGLLIAYPLLINSL. Over 46-298 the chain is Cytoplasmic; that stretch reads RYRRLKQLQK…RLRKAMLYVE (253 aa).

The protein belongs to the mpaB oxygenase family.

Its subcellular location is the endoplasmic reticulum membrane. The enzyme catalyses 4-farnesyl-3,5-dihydroxy-6-methylphthalide + AH2 + 2 O2 = (4E,8E)-10-(4,6-dihydroxy-7-methyl-3-oxo-1,3-dihydro-2-benzofuran-5-yl)-4,8-dimethyldeca-4,8-dienoate + acetone + A + H2O + H(+). It participates in secondary metabolite biosynthesis; terpenoid biosynthesis. Functionally, ER-bound oxygenase; part of the gene cluster that mediates the biosynthesis of mycophenolic acid (MPA), the first isolated antibiotic natural product in the world obtained from a culture of Penicillium brevicompactum in 1893. MpaB catalyzes the oxidative cleavage the C19-C20 double bond in farnesyl-DHMP (FDHMP) to yield FDHMP-3C via a mycophenolic aldehyde intermediate. The first step of the pathway is the synthesis of 5-methylorsellinic acid (5MOA) by the cytosolic polyketide synthase mpaC. 5MOA is then converted to the phthalide compound 5,7-dihydroxy-4,6-dimethylphthalide (DHMP) by the endoplasmic reticulum-bound cytochrome P450 monooxygenase mpaDE. MpaDE first catalyzes hydroxylation of 5-MOA to 4,6-dihydroxy-2-(hydroxymethyl)-3-methylbenzoic acid (DHMB). MpaDE then acts as a lactone synthase that catalyzes the ring closure to convert DHMB into DHMP. The next step is the prenylation of DHMP by the Golgi apparatus-associated prenyltransferase mpaA to yield farnesyl-DHMP (FDHMP). The ER-bound oxygenase mpaB then mediates the oxidative cleavage the C19-C20 double bond in FDHMP to yield FDHMP-3C via a mycophenolic aldehyde intermediate. The O-methyltransferase mpaG catalyzes the methylation of FDHMP-3C to yield MFDHMP-3C. After the cytosolic methylation of FDHMP-3C, MFDHMP-3C enters into peroxisomes probably via free diffusion due to its low molecular weight. Upon a peroxisomal CoA ligation reaction, catalyzed by a beta-oxidation component enzyme acyl-CoA ligase ACL891, MFDHMP-3C-CoA would then be restricted to peroxisomes for the following beta-oxidation pathway steps. The peroxisomal beta-oxidation machinery than converts MFDHMP-3C-CoA into MPA_CoA, via a beta-oxidation chain-shortening process. Finally mpaH acts as a peroxisomal acyl-CoA hydrolase with high substrate specificity toward MPA-CoA to release the final product MPA. This chain is ER-bound oxygenase mpaB, found in Penicillium roqueforti (strain FM164).